Consider the following 565-residue polypeptide: Dihydroxy-acid dehydratase (565 aa).

Mg(2+) is bound at residue aspartate 80. Cysteine 121 lines the [2Fe-2S] cluster pocket. 2 residues coordinate Mg(2+): aspartate 122 and lysine 123. Lysine 123 carries the N6-carboxylysine modification. Cysteine 194 provides a ligand contact to [2Fe-2S] cluster. Residue glutamate 447 coordinates Mg(2+). Serine 473 serves as the catalytic Proton acceptor.

This sequence belongs to the IlvD/Edd family. In terms of assembly, homodimer. The cofactor is [2Fe-2S] cluster. Mg(2+) is required as a cofactor.

The enzyme catalyses (2R)-2,3-dihydroxy-3-methylbutanoate = 3-methyl-2-oxobutanoate + H2O. The catalysed reaction is (2R,3R)-2,3-dihydroxy-3-methylpentanoate = (S)-3-methyl-2-oxopentanoate + H2O. Its pathway is amino-acid biosynthesis; L-isoleucine biosynthesis; L-isoleucine from 2-oxobutanoate: step 3/4. The protein operates within amino-acid biosynthesis; L-valine biosynthesis; L-valine from pyruvate: step 3/4. Its function is as follows. Functions in the biosynthesis of branched-chain amino acids. Catalyzes the dehydration of (2R,3R)-2,3-dihydroxy-3-methylpentanoate (2,3-dihydroxy-3-methylvalerate) into 2-oxo-3-methylpentanoate (2-oxo-3-methylvalerate) and of (2R)-2,3-dihydroxy-3-methylbutanoate (2,3-dihydroxyisovalerate) into 2-oxo-3-methylbutanoate (2-oxoisovalerate), the penultimate precursor to L-isoleucine and L-valine, respectively. This chain is Dihydroxy-acid dehydratase, found in Chlorobium luteolum (strain DSM 273 / BCRC 81028 / 2530) (Pelodictyon luteolum).